The chain runs to 4265 residues: Dynein axonemal heavy chain 1 (4265 aa).

Positions M1–K88 are disordered. A stem region spans residues M1–I1542. Pro residues predominate over residues P60–P69. AAA stretches follow at residues Y1543–A1764, E1824–K2057, T2189–G2449, and D2547–H2799. Residues G1581–T1588 carry the GPAGTGKT motif motif. Residue G1581 to T1588 coordinates ATP. A CFDEFNR motif motif is present at residues C1631–R1637. ATP contacts are provided by residues G1862 to S1869, G2227 to T2234, and G2586 to S2593. Positions F2814–C3112 are stalk. The stretch at L3074–L3122 forms a coiled coil. AAA stretches follow at residues L3197 to A3427 and M3640 to M3859.

The protein belongs to the dynein heavy chain family. In terms of assembly, consists of at least two heavy chains and a number of intermediate and light chains. In terms of tissue distribution, expressed primarily in trachea and testis, 2 tissues containing axonemal structures. Also expressed in brain.

It localises to the cytoplasm. The protein localises to the cytoskeleton. It is found in the cilium axoneme. The protein resides in the cell projection. Its subcellular location is the cilium. It localises to the flagellum. Its function is as follows. Force generating protein of cilia required for sperm flagellum motility. Produces force towards the minus ends of microtubules. Dynein has ATPase activity; the force-producing power stroke is thought to occur on release of ADP. Required in spermatozoa for the formation of the inner dynein arms and biogenesis of the axoneme. The polypeptide is Dynein axonemal heavy chain 1 (Homo sapiens (Human)).